Reading from the N-terminus, the 229-residue chain is Probable endo-1,4-beta-xylanase A (229 aa).

The N-terminal stretch at 1–18 (MVSFKYLFLAASALGALA) is a signal peptide. Residues asparagine 30 and asparagine 100 are each glycosylated (N-linked (GlcNAc...) asparagine). The GH11 domain maps to 41–229 (AGTPSSTGWN…SSGSSSITVY (189 aa)). Residue glutamate 125 is the Nucleophile of the active site. Glutamate 216 functions as the Proton donor in the catalytic mechanism.

Belongs to the glycosyl hydrolase 11 (cellulase G) family.

It localises to the secreted. It carries out the reaction Endohydrolysis of (1-&gt;4)-beta-D-xylosidic linkages in xylans.. It participates in glycan degradation; xylan degradation. Functionally, endo-1,4-beta-xylanase involved in the hydrolysis of xylan, a major structural heterogeneous polysaccharide found in plant biomass representing the second most abundant polysaccharide in the biosphere, after cellulose. The sequence is that of Probable endo-1,4-beta-xylanase A (xlnA) from Aspergillus clavatus (strain ATCC 1007 / CBS 513.65 / DSM 816 / NCTC 3887 / NRRL 1 / QM 1276 / 107).